A 200-amino-acid chain; its full sequence is Dephospho-CoA kinase (200 aa).

In terms of domain architecture, DPCK spans 4–200 (TIGLTGSVAT…TFIKRFVKNK (197 aa)). 12-17 (ATGKST) contacts ATP.

The protein belongs to the CoaE family.

It localises to the cytoplasm. The catalysed reaction is 3'-dephospho-CoA + ATP = ADP + CoA + H(+). It participates in cofactor biosynthesis; coenzyme A biosynthesis; CoA from (R)-pantothenate: step 5/5. Catalyzes the phosphorylation of the 3'-hydroxyl group of dephosphocoenzyme A to form coenzyme A. The protein is Dephospho-CoA kinase of Listeria monocytogenes serotype 4b (strain F2365).